A 1237-amino-acid chain; its full sequence is GTPase activating protein BUD2 (1237 aa).

Positions 79-110 (GSGKSSISQPPPTTSTRRNLLRKSSNLNSSDQ) are enriched in low complexity. Positions 79-124 (GSGKSSISQPPPTTSTRRNLLRKSSNLNSSDQSHSKSSEDNEHQPP) are disordered. Basic and acidic residues predominate over residues 111 to 121 (SHSKSSEDNEH). The C2 domain occupies 381-503 (NVEHPQLYDF…KQIKTTSTIM (123 aa)). One can recognise a Ras-GAP domain in the interval 637–905 (NSQDQAVSNS…PEIYDYFDKL (269 aa)). 2 disordered regions span residues 721 to 762 (SIHE…ERER) and 969 to 1007 (NNNG…PDLD). Positions 735–754 (DVSDDDDDDDDNSSDDDADY) are enriched in acidic residues. Basic and acidic residues predominate over residues 986 to 996 (RDMEREQDRSR). The stretch at 1065–1093 (NITLKDIQKQSTKIMNKIQELEIYLENYE) forms a coiled coil. Residues 1170–1204 (NGGMGNRNGHDVNGHNNNNNNNNNNTGDGYNETDR) form a disordered region. The span at 1183 to 1199 (GHNNNNNNNNNNTGDGY) shows a compositional bias: low complexity.

The protein resides in the cytoplasm. The protein localises to the cell cortex. It localises to the cell tip. Its subcellular location is the cell septum. GTPase activating protein (GAP) for RSR1 which is involved in the polarization of yeast and hyphal cells. Directs the site of new daughter cell growth in yeast and hyphal cells. Important for hyphae to maintain linear growth and necessary for hyphal responses to directional cues in the environment (tropisms). Required for correct localization of the septin rings and stabilization of the polarisome at hyphal tips. Involved in cell adhesion. The sequence is that of GTPase activating protein BUD2 (BUD2) from Candida albicans (strain SC5314 / ATCC MYA-2876) (Yeast).